We begin with the raw amino-acid sequence, 408 residues long: Argininosuccinate synthase (408 aa).

ATP is bound by residues 11–19 (AYSGGLDTS) and A38. Positions 91 and 96 each coordinate L-citrulline. G121 contributes to the ATP binding site. Residues T123, N127, and D128 each contribute to the L-aspartate site. Position 127 (N127) interacts with L-citrulline. 5 residues coordinate L-citrulline: R131, S182, S191, E267, and Y279.

Belongs to the argininosuccinate synthase family. Type 1 subfamily. In terms of assembly, homotetramer.

It localises to the cytoplasm. It carries out the reaction L-citrulline + L-aspartate + ATP = 2-(N(omega)-L-arginino)succinate + AMP + diphosphate + H(+). It participates in amino-acid biosynthesis; L-arginine biosynthesis; L-arginine from L-ornithine and carbamoyl phosphate: step 2/3. This Paracoccus denitrificans (strain Pd 1222) protein is Argininosuccinate synthase.